A 439-amino-acid polypeptide reads, in one-letter code: ATP-dependent RNA helicase RhlB (439 aa).

Residues 9–37 (QKFADLPLCDEVKQALNENGFEHCTPIQA) carry the Q motif motif. Positions 40–219 (LPVLLEKKDI…YDHMNDPVKV (180 aa)) constitute a Helicase ATP-binding domain. 53-60 (AQTGTGKT) is a binding site for ATP. A DEAD box motif is present at residues 165 to 168 (DEAD). Residues 243–390 (KLKLLHSLIE…VTSYDRDALI (148 aa)) form the Helicase C-terminal domain. A disordered region spans residues 394 to 439 (PPVKIHRKPHAGGRNLRDRNGSPRPSGSHRSGSGRPPRHDRTRRHS). The span at 415–428 (SPRPSGSHRSGSGR) shows a compositional bias: low complexity. Basic residues predominate over residues 429–439 (PPRHDRTRRHS).

It belongs to the DEAD box helicase family. RhlB subfamily. Component of the RNA degradosome, which is a multiprotein complex involved in RNA processing and mRNA degradation.

The protein localises to the cytoplasm. It carries out the reaction ATP + H2O = ADP + phosphate + H(+). In terms of biological role, DEAD-box RNA helicase involved in RNA degradation. Has RNA-dependent ATPase activity and unwinds double-stranded RNA. This chain is ATP-dependent RNA helicase RhlB, found in Shewanella amazonensis (strain ATCC BAA-1098 / SB2B).